Reading from the N-terminus, the 510-residue chain is Serine/threonine protein phosphatase 2A 57 kDa regulatory subunit B' kappa isoform (510 aa).

A disordered region spans residues 1-51; sequence MWKGFLSKLPRKTSASGRGADLDSGQCSNGAGNGNPIQRTSSCGSIPSGRS. The span at 25–51 shows a compositional bias: polar residues; sequence GQCSNGAGNGNPIQRTSSCGSIPSGRS. T476 and T493 each carry phosphothreonine. A Phosphoserine modification is found at S502. At T508 the chain carries Phosphothreonine.

Belongs to the phosphatase 2A regulatory subunit B56 family. As to quaternary structure, PP2A consists of a common heteromeric enzyme, composed of a catalytic subunit (subunits C), a constant regulatory subunit (subunit A), and a variety of regulatory subunits such as subunits B (the R2/B/PR55/B55, R3/B''/PR72/PR130/PR59 and R5/B'/B56 families). Interacts with SIT1. In terms of processing, phosphorylated at Thr-476, Thr-493, Ser-502 and Thr-508 by SIT1. In terms of tissue distribution, expressed in root stele and epidermal cells.

It localises to the cytoplasm. It is found in the cytosol. Its subcellular location is the cell membrane. Its function is as follows. B regulatory subunit of phosphatase 2A (PP2A) involved in salt stress response. Under salt stress conditions, required for the catalytic activity of PP2A and the dephosphorylation of SIT1, a negative regulator of salt tolerance. Dephosphorylation of SIT1 turns off salt-induced SIT1 activity directly, which has a positive effect on salt tolerance. The polypeptide is Serine/threonine protein phosphatase 2A 57 kDa regulatory subunit B' kappa isoform (Oryza sativa subsp. japonica (Rice)).